Here is a 199-residue protein sequence, read N- to C-terminus: MIALLTGRLAHKSPDAIIIDVNGVGYRVQIPFSTYYELPEEGKTVSLSIHTHVKEDSISLFGFRTLAEKEFFQLLISVSGIGPKMARDILSNIQPEELAAAIVQGNLVRLSSIPGIGKKTAERLVLELKEKVRKMDVAPSAQEAPSSEAPAEVADDVASALVNLGYKEAVVRKVLAEMSIEPDASTEAVLRQALKVLMK.

Residues 1–64 are domain I; that stretch reads MIALLTGRLA…EDSISLFGFR (64 aa). The segment at 65 to 143 is domain II; the sequence is TLAEKEFFQL…KMDVAPSAQE (79 aa). Positions 144–154 are flexible linker; sequence APSSEAPAEVA. Residues 154–199 are domain III; the sequence is ADDVASALVNLGYKEAVVRKVLAEMSIEPDASTEAVLRQALKVLMK.

It belongs to the RuvA family. As to quaternary structure, homotetramer. Forms an RuvA(8)-RuvB(12)-Holliday junction (HJ) complex. HJ DNA is sandwiched between 2 RuvA tetramers; dsDNA enters through RuvA and exits via RuvB. An RuvB hexamer assembles on each DNA strand where it exits the tetramer. Each RuvB hexamer is contacted by two RuvA subunits (via domain III) on 2 adjacent RuvB subunits; this complex drives branch migration. In the full resolvosome a probable DNA-RuvA(4)-RuvB(12)-RuvC(2) complex forms which resolves the HJ.

It is found in the cytoplasm. The RuvA-RuvB-RuvC complex processes Holliday junction (HJ) DNA during genetic recombination and DNA repair, while the RuvA-RuvB complex plays an important role in the rescue of blocked DNA replication forks via replication fork reversal (RFR). RuvA specifically binds to HJ cruciform DNA, conferring on it an open structure. The RuvB hexamer acts as an ATP-dependent pump, pulling dsDNA into and through the RuvAB complex. HJ branch migration allows RuvC to scan DNA until it finds its consensus sequence, where it cleaves and resolves the cruciform DNA. This chain is Holliday junction branch migration complex subunit RuvA, found in Geobacter sulfurreducens (strain ATCC 51573 / DSM 12127 / PCA).